A 142-amino-acid chain; its full sequence is Putative pre-16S rRNA nuclease (142 aa).

The protein belongs to the YqgF nuclease family.

The protein localises to the cytoplasm. Functionally, could be a nuclease involved in processing of the 5'-end of pre-16S rRNA. The chain is Putative pre-16S rRNA nuclease from Malacoplasma penetrans (strain HF-2) (Mycoplasma penetrans).